Consider the following 160-residue polypeptide: Putative 4-hydroxy-4-methyl-2-oxoglutarate aldolase (160 aa).

Substrate is bound by residues 78–81 (GDVI) and Arg-100. Asp-101 is an a divalent metal cation binding site.

Belongs to the class II aldolase/RraA-like family. In terms of assembly, homotrimer. It depends on a divalent metal cation as a cofactor.

It catalyses the reaction 4-hydroxy-4-methyl-2-oxoglutarate = 2 pyruvate. The enzyme catalyses oxaloacetate + H(+) = pyruvate + CO2. Functionally, catalyzes the aldol cleavage of 4-hydroxy-4-methyl-2-oxoglutarate (HMG) into 2 molecules of pyruvate. Also contains a secondary oxaloacetate (OAA) decarboxylase activity due to the common pyruvate enolate transition state formed following C-C bond cleavage in the retro-aldol and decarboxylation reactions. The sequence is that of Putative 4-hydroxy-4-methyl-2-oxoglutarate aldolase from Mycolicibacterium paratuberculosis (strain ATCC BAA-968 / K-10) (Mycobacterium paratuberculosis).